The chain runs to 303 residues: Probable 5-dehydro-4-deoxyglucarate dehydratase (303 aa).

The protein belongs to the DapA family.

It catalyses the reaction 5-dehydro-4-deoxy-D-glucarate + H(+) = 2,5-dioxopentanoate + CO2 + H2O. Its pathway is carbohydrate acid metabolism; D-glucarate degradation; 2,5-dioxopentanoate from D-glucarate: step 2/2. The sequence is that of Probable 5-dehydro-4-deoxyglucarate dehydratase from Leptothrix cholodnii (strain ATCC 51168 / LMG 8142 / SP-6) (Leptothrix discophora (strain SP-6)).